The following is a 223-amino-acid chain: Deoxyribose-phosphate aldolase (223 aa).

Aspartate 91 acts as the Proton donor/acceptor in catalysis. Lysine 154 functions as the Schiff-base intermediate with acetaldehyde in the catalytic mechanism. The active-site Proton donor/acceptor is lysine 183.

This sequence belongs to the DeoC/FbaB aldolase family. DeoC type 1 subfamily.

It localises to the cytoplasm. It carries out the reaction 2-deoxy-D-ribose 5-phosphate = D-glyceraldehyde 3-phosphate + acetaldehyde. The protein operates within carbohydrate degradation; 2-deoxy-D-ribose 1-phosphate degradation; D-glyceraldehyde 3-phosphate and acetaldehyde from 2-deoxy-alpha-D-ribose 1-phosphate: step 2/2. Its function is as follows. Catalyzes a reversible aldol reaction between acetaldehyde and D-glyceraldehyde 3-phosphate to generate 2-deoxy-D-ribose 5-phosphate. The protein is Deoxyribose-phosphate aldolase of Geobacillus kaustophilus (strain HTA426).